A 260-amino-acid polypeptide reads, in one-letter code: Uroplakin-1b (260 aa).

Residues Ala2 to Leu15 are Cytoplasmic-facing. A helical transmembrane segment spans residues Ile16–Phe36. Topologically, residues Val37–Trp60 are extracellular. The chain crosses the membrane as a helical span at residues Ile61–Met81. The Cytoplasmic portion of the chain corresponds to Lys82 to Lys86. A helical transmembrane segment spans residues Ile87–Ile107. Residues Thr108 to His229 lie on the Extracellular side of the membrane. Residues Ala230–Gly250 form a helical membrane-spanning segment. Topologically, residues Thr251 to Tyr260 are cytoplasmic.

This sequence belongs to the tetraspanin (TM4SF) family. In terms of assembly, heterodimer with uroplakin-3A (UPK3A) or uroplakin-3B (UPK3B). Post-translationally, N-glycosylated with high-mannose oligosaccharides. Bladder epithelium.

It localises to the membrane. Component of the asymmetric unit membrane (AUM); a highly specialized biomembrane elaborated by terminally differentiated urothelial cells. May play an important role in normal bladder epithelial physiology, possibly in regulating membrane permeability of superficial umbrella cells or in stabilizing the apical membrane through AUM/cytoskeletal interactions. This chain is Uroplakin-1b (UPK1B), found in Bos taurus (Bovine).